The following is a 64-amino-acid chain: Beta-defensin 2 (64 aa).

A signal peptide spans 1–22 (MRLHHLLLVLFFVVLSAGSGFT). 3 disulfide bridges follow: Cys31–Cys60, Cys38–Cys53, and Cys43–Cys61.

The protein belongs to the beta-defensin family.

The protein localises to the secreted. Has bactericidal activity. The protein is Beta-defensin 2 (DEFB2) of Ovis aries (Sheep).